A 69-amino-acid chain; its full sequence is Sec-independent protein translocase protein TatA (69 aa).

Residues 1 to 21 (MFGLGGQELVLILLIVLLLFG) traverse the membrane as a helical segment. The segment covering 47 to 63 (EEEFNKSMDDNPKKEKA) has biased composition (basic and acidic residues). Residues 47 to 69 (EEEFNKSMDDNPKKEKATTASKS) form a disordered region.

The protein belongs to the TatA/E family. As to quaternary structure, forms a complex with TatC.

It localises to the cell inner membrane. In terms of biological role, part of the twin-arginine translocation (Tat) system that transports large folded proteins containing a characteristic twin-arginine motif in their signal peptide across membranes. TatA could form the protein-conducting channel of the Tat system. The polypeptide is Sec-independent protein translocase protein TatA (Chlorobium chlorochromatii (strain CaD3)).